The chain runs to 245 residues: Small ribosomal subunit protein uS2 (245 aa).

The protein belongs to the universal ribosomal protein uS2 family.

This Dehalococcoides mccartyi (strain CBDB1) protein is Small ribosomal subunit protein uS2.